The primary structure comprises 391 residues: MTDDDSETSASETQAQEESDLPVFQLCGLVEELSYGNSALKTETEMFEKYYNKLELKDQRPPRLSEIKITGAEIAQLRSRRKSKSRMGMERVMGLSVDQKLELVQKELEDTKDEIRHMRANAERDLQHHEAIIEEAEIRWTEVQKEVHDFEKDILKTISKKKGSILATQKVMKYIEDMNRRRDNMKDKLRLKNVSLKVQRKKLLLQLRQKEEVGEALHDVDFQQLKIENAQFLETIEARNQELIQMKLASGNTLQILNAYKRSSLLKTSRVVILQSKLHHAMQMSLNLTKEFLLRKELLEKIEKETLQAEEDRAKALALNKQLRKQLSEFRAPQVMIYIWEKIRNGDLEKTIRMWERKVEIAEMSLKGYRKAWNKMKTTNEQLQAISGPGK.

Residues M1–L21 are disordered. 2 coiled-coil regions span residues L95–L243 and L294–Y369.

This sequence belongs to the CFAP263 family. As to quaternary structure, forms a complex with CFAP184; the interaction is required for functional activity in cilia. Interacts with HAP1 and PCM1.

It localises to the cytoplasm. It is found in the cytoskeleton. The protein resides in the microtubule organizing center. Its subcellular location is the centrosome. The protein localises to the centriolar satellite. It localises to the cell projection. It is found in the cilium. Its function is as follows. Component of centriolar satellites contributing to primary cilium formation. In complex with CFAP263, acts as a regulator of ciliary beating that connects radial spoke 3 (RS3) to the inner dynein arm (IDA) and the nexin-dynein regulatory complex (N-DRC). The complex is positioned parallel to N-DRC and forms a connection between the arch at the base of RS3, the IDA tail and N-DRC. This Bos taurus (Bovine) protein is Cilia- and flagella-associated protein 263 (CFAP263).